Consider the following 492-residue polypeptide: MQVTETLNSGLKREIKITVPAGDMEAKLMARLSDARNKVRINGFRPGKVPVQHLRKVYGKSFMAEVVNEILNDSTRSIITGRGEKAAMQPEVIMTEDEKEAEKILAGGTDFEFRLNYEVIPAIEIKDFSDIKVTRQVFDVPDAEIDDQVKRVAESARSYEPKTGKAAEGDRVSIDYVGKIDGEAFAGGAGTDQLLVLGSKEFIPGFEDQLIGTKAGDEKQVTVTFPENYQAAHLAGKEATFDVTVKEVSKPGELEINDETAKNLGLESLERLREIVRGQIENQFGSMTRQKVKRQLLDQLDAAYSFEAPSKLIDAEFNNIWAQVTRDLEAAGRTFADEETTEEEARAEYLRLAERRVRLGLVLAEIGEKAGVTVSDEELQRGLFEQVRRFPANQQQEAFEFYRSNPEALNALRAPMFEEKVVDHLLGQISVTDVKVSKEELMADDEDAETTTKAKPAKKAAAKKAEAKANEDEAEEPKKKAAPKKKAAKDAE.

Residues 169-254 form the PPIase FKBP-type domain; sequence GDRVSIDYVG…VKEVSKPGEL (86 aa). A disordered region spans residues 441 to 492; that stretch reads LMADDEDAETTTKAKPAKKAAAKKAEAKANEDEAEEPKKKAAPKKKAAKDAE. Positions 463 to 479 are enriched in basic and acidic residues; the sequence is KKAEAKANEDEAEEPKK. Over residues 480-492 the composition is skewed to basic residues; it reads KAAPKKKAAKDAE.

It belongs to the FKBP-type PPIase family. Tig subfamily.

It localises to the cytoplasm. It carries out the reaction [protein]-peptidylproline (omega=180) = [protein]-peptidylproline (omega=0). In terms of biological role, involved in protein export. Acts as a chaperone by maintaining the newly synthesized protein in an open conformation. Functions as a peptidyl-prolyl cis-trans isomerase. This chain is Trigger factor, found in Mesorhizobium japonicum (strain LMG 29417 / CECT 9101 / MAFF 303099) (Mesorhizobium loti (strain MAFF 303099)).